The sequence spans 402 residues: Arginine deiminase (402 aa).

Residue Cys391 is the Amidino-cysteine intermediate of the active site.

It belongs to the arginine deiminase family.

It is found in the cytoplasm. It carries out the reaction L-arginine + H2O = L-citrulline + NH4(+). It functions in the pathway amino-acid degradation; L-arginine degradation via ADI pathway; carbamoyl phosphate from L-arginine: step 1/2. In Mycobacterium marinum (strain ATCC BAA-535 / M), this protein is Arginine deiminase.